Reading from the N-terminus, the 338-residue chain is NADPH dehydrogenase (338 aa).

Tyr28 provides a ligand contact to substrate. Residues Ala60 and Gln102 each contribute to the FMN site. 164–167 (HAAH) is a substrate binding site. FMN is bound by residues Arg215 and 307-308 (AR).

This sequence belongs to the NADH:flavin oxidoreductase/NADH oxidase family. NamA subfamily. Homotetramer. The cofactor is FMN.

The catalysed reaction is A + NADPH + H(+) = AH2 + NADP(+). Catalyzes the reduction of the double bond of an array of alpha,beta-unsaturated aldehydes and ketones. It also reduces the nitro group of nitroester and nitroaromatic compounds. It could have a role in detoxification processes. The chain is NADPH dehydrogenase from Bacillus velezensis (strain DSM 23117 / BGSC 10A6 / LMG 26770 / FZB42) (Bacillus amyloliquefaciens subsp. plantarum).